We begin with the raw amino-acid sequence, 498 residues long: MADNKTENALSSDATEVRAQKLKLLREQIGDVYPAHFHRTMTNAELGAKYESLEPDVETQDVVTVAGRVYSSRNSGMFMDIHDASGKIQIFSHKDVTGEEARALLPMIDIGDIIGVTGVVRRTKRGELTINAQKIEMLTKSLLPMPEKWHGLSDIELRYRKRHLDIMTNEDSKLRFQQRSKIVSGIRRFMENDGFMEVETPMLQSIYGGATAEPFKTHHNTLKLDMYLRIAPELFLKRTLVSGLTDKVFEINRNFRNEGVSTRHNPEFTMMECYWAYADYEDMMDLVERLFEALALSIHGTTEFDFGDKRLSFKGPFKRVPMPDAVKEATGIDFLTIKTDEEARAAAKAAGFAVEKDWTWGECLAFIFEEKVEATLIQPSHVTHFPKDISPFAKEVPGEPRLVERFETYCNAWELGNAFSELNDPEEQRRRMVEQLEQAHARGEKEKQLDEEFLDAIDQGMPPAGGLGIGVDRLIMLLTNAPSIRDVILFPARRNKAD.

Residues Glu-407 and Glu-414 each contribute to the Mg(2+) site.

This sequence belongs to the class-II aminoacyl-tRNA synthetase family. In terms of assembly, homodimer. Mg(2+) serves as cofactor.

The protein resides in the cytoplasm. The enzyme catalyses tRNA(Lys) + L-lysine + ATP = L-lysyl-tRNA(Lys) + AMP + diphosphate. This is Lysine--tRNA ligase from Rhizobium etli (strain CIAT 652).